A 188-amino-acid chain; its full sequence is VQ motif-containing protein 18 (188 aa).

Disordered regions lie at residues 1–20 (MEIT…VSMN), 58–92 (LTGK…HQPV), and 157–188 (GFIF…HNSS). Positions 51 to 60 (FRSLVQSLTG) match the VQ motif. Low complexity predominate over residues 161–179 (NNNNNNNNNNNNNNNNNTN).

Its subcellular location is the nucleus. May function as positive regulator of plant growth. This Arabidopsis thaliana (Mouse-ear cress) protein is VQ motif-containing protein 18.